The chain runs to 421 residues: MACARPLISVYSEKGESSGKNVTLPAVFKAPIRPDIVNFVHTNLRKNNRQPYAVSELAGHQTSAESWGTGRAVARIPRVRGGGTHRSGQGAFGNMCRGGRMFAPTKTWRRWHRRVNTTQKRYAICSALACLSLPALVMSKGHRIEEVPELPLVVEDKVEGYKKTKEAVLLLKKLKAWNDIKKVYASQRMRAGKGKMRNRRRIQRRGPCIIYNEDNGIIKAFRKHPGITLLNVSKLNILKLAPGGHVGRFCIWTESAFRKLDDLYGTWRKAASLKSNYNLPMHKMLNTDLSRILKMPRDPRALRAPRKKIHRRVLKKNPLKNLRIMLKLNPYAKTMRRNTILRQAKNHKLRMDKAAAALEAKSEEKGVPGKKPRRKKGKKTVGVKKPKKPVVGKKAAATKKPAADKKPAEKKPTTEEKKPAA.

A2 bears the N-acetylalanine mark. N6-acetyllysine is present on K14. An Omega-N-methylarginine modification is found at R97. K106 is subject to N6-acetyllysine. K239 is covalently cross-linked (Glycyl lysine isopeptide (Lys-Gly) (interchain with G-Cter in SUMO2)). K259 is modified (N6-acetyllysine). T266 is modified (phosphothreonine). Residue S290 is modified to Phosphoserine. At R300 the chain carries Citrulline. K327 is covalently cross-linked (Glycyl lysine isopeptide (Lys-Gly) (interchain with G-Cter in SUMO2)). K333 and K353 each carry N6-acetyllysine. The disordered stretch occupies residues E359–A421. K361 bears the N6-acetyllysine; alternate mark. K361 participates in a covalent cross-link: Glycyl lysine isopeptide (Lys-Gly) (interchain with G-Cter in SUMO1); alternate. S362 carries the phosphoserine modification. The span at P368–V391 shows a compositional bias: basic residues. Residues P401–A421 show a composition bias toward basic and acidic residues.

Belongs to the universal ribosomal protein uL4 family. As to quaternary structure, component of the large ribosomal subunit. May bind IPO9 with low affinity. Interacts with RBM3. Post-translationally, citrullinated by PADI4.

It localises to the cytoplasm. In terms of biological role, component of the large ribosomal subunit. The ribosome is a large ribonucleoprotein complex responsible for the synthesis of proteins in the cell. The polypeptide is Large ribosomal subunit protein uL4 (RPL4) (Canis lupus familiaris (Dog)).